The following is a 395-amino-acid chain: Elongation factor Tu (395 aa).

Positions 10–205 constitute a tr-type G domain; it reads KVHMNVGTIG…AMDSYFEDPV (196 aa). The G1 stretch occupies residues 19–26; it reads GHVDHGKT. 19-26 provides a ligand contact to GTP; it reads GHVDHGKT. Residue Thr-26 coordinates Mg(2+). A G2 region spans residues 60 to 64; it reads GITIN. The segment at 81–84 is G3; the sequence is DCPG. GTP-binding positions include 81–85 and 136–139; these read DCPGH and NKVD. A G4 region spans residues 136–139; the sequence is NKVD. The segment at 173–175 is G5; it reads SAF.

Belongs to the TRAFAC class translation factor GTPase superfamily. Classic translation factor GTPase family. EF-Tu/EF-1A subfamily. Monomer.

The protein localises to the cytoplasm. It catalyses the reaction GTP + H2O = GDP + phosphate + H(+). Functionally, GTP hydrolase that promotes the GTP-dependent binding of aminoacyl-tRNA to the A-site of ribosomes during protein biosynthesis. This chain is Elongation factor Tu, found in Treponema pallidum (strain Nichols).